Consider the following 136-residue polypeptide: Serine--glyoxylate aminotransferase (136 aa).

This sequence belongs to the class-V pyridoxal-phosphate-dependent aminotransferase family. As to quaternary structure, homodimer. Pyridoxal 5'-phosphate is required as a cofactor. Expressed in leaves but not in root tissue or seedlings.

The protein localises to the peroxisome. It catalyses the reaction glyoxylate + L-serine = 3-hydroxypyruvate + glycine. The catalysed reaction is glyoxylate + L-alanine = glycine + pyruvate. Its activity is regulated as follows. Inhibited by aminooxyacetate. The chain is Serine--glyoxylate aminotransferase from Zea mays (Maize).